The chain runs to 820 residues: Trimethylamine-N-oxide reductase (820 aa).

Residues 1-33 (MAITRRSFLKGVATTSAASIIGPSLLTSVSAQA) constitute a signal peptide (tat-type signal). Residue Ser-179 participates in Mo-bis(molybdopterin guanine dinucleotide) binding.

It belongs to the prokaryotic molybdopterin-containing oxidoreductase family. Mo-bis(molybdopterin guanine dinucleotide) serves as cofactor. Predicted to be exported by the Tat system. The position of the signal peptide cleavage has not been experimentally proven.

It localises to the periplasm. It carries out the reaction trimethylamine + 2 Fe(III)-[cytochrome c] + H2O = trimethylamine N-oxide + 2 Fe(II)-[cytochrome c] + 3 H(+). Its function is as follows. Reduces trimethylamine-N-oxide (TMAO) into trimethylamine; an anaerobic reaction coupled to energy-yielding reactions. The chain is Trimethylamine-N-oxide reductase (torA) from Vibrio cholerae serotype O1 (strain ATCC 39315 / El Tor Inaba N16961).